We begin with the raw amino-acid sequence, 264 residues long: 3-methyl-2-oxobutanoate hydroxymethyltransferase (264 aa).

Positions 45 and 84 each coordinate Mg(2+). 3-methyl-2-oxobutanoate is bound by residues 45 to 46 (DS), D84, and K112. E114 contributes to the Mg(2+) binding site. E181 serves as the catalytic Proton acceptor.

It belongs to the PanB family. In terms of assembly, homodecamer; pentamer of dimers. The cofactor is Mg(2+).

The protein localises to the cytoplasm. It catalyses the reaction 3-methyl-2-oxobutanoate + (6R)-5,10-methylene-5,6,7,8-tetrahydrofolate + H2O = 2-dehydropantoate + (6S)-5,6,7,8-tetrahydrofolate. It participates in cofactor biosynthesis; (R)-pantothenate biosynthesis; (R)-pantoate from 3-methyl-2-oxobutanoate: step 1/2. Functionally, catalyzes the reversible reaction in which hydroxymethyl group from 5,10-methylenetetrahydrofolate is transferred onto alpha-ketoisovalerate to form ketopantoate. The polypeptide is 3-methyl-2-oxobutanoate hydroxymethyltransferase (Shewanella denitrificans (strain OS217 / ATCC BAA-1090 / DSM 15013)).